Here is a 154-residue protein sequence, read N- to C-terminus: Nucleoside diphosphate kinase A1 (154 aa).

ATP-binding residues include K13, F61, R89, T95, R106, and N116. H119 serves as the catalytic Pros-phosphohistidine intermediate.

It belongs to the NDK family. Mg(2+) is required as a cofactor.

It localises to the cytoplasm. It catalyses the reaction a 2'-deoxyribonucleoside 5'-diphosphate + ATP = a 2'-deoxyribonucleoside 5'-triphosphate + ADP. The catalysed reaction is a ribonucleoside 5'-diphosphate + ATP = a ribonucleoside 5'-triphosphate + ADP. Its function is as follows. Major role in the synthesis of nucleoside triphosphates other than ATP. The ATP gamma phosphate is transferred to the NDP beta phosphate via a ping-pong mechanism, using a phosphorylated active-site intermediate. This Xenopus laevis (African clawed frog) protein is Nucleoside diphosphate kinase A1.